A 324-amino-acid chain; its full sequence is Beta-ketoacyl-[acyl-carrier-protein] synthase III (324 aa).

Residues Cys112 and His249 contribute to the active site. Positions Gln250–Arg254 are ACP-binding. Residue Asn279 is part of the active site.

It belongs to the thiolase-like superfamily. FabH family. Homodimer.

It localises to the cytoplasm. It carries out the reaction malonyl-[ACP] + acetyl-CoA + H(+) = 3-oxobutanoyl-[ACP] + CO2 + CoA. It functions in the pathway lipid metabolism; fatty acid biosynthesis. In terms of biological role, catalyzes the condensation reaction of fatty acid synthesis by the addition to an acyl acceptor of two carbons from malonyl-ACP. Catalyzes the first condensation reaction which initiates fatty acid synthesis and may therefore play a role in governing the total rate of fatty acid production. Possesses both acetoacetyl-ACP synthase and acetyl transacylase activities. Its substrate specificity determines the biosynthesis of branched-chain and/or straight-chain of fatty acids. This chain is Beta-ketoacyl-[acyl-carrier-protein] synthase III, found in Streptococcus pyogenes serotype M1.